The chain runs to 556 residues: 2-succinyl-5-enolpyruvyl-6-hydroxy-3-cyclohexene-1-carboxylate synthase (556 aa).

It belongs to the TPP enzyme family. MenD subfamily. Homodimer. Requires Mg(2+) as cofactor. Mn(2+) is required as a cofactor. The cofactor is thiamine diphosphate.

The catalysed reaction is isochorismate + 2-oxoglutarate + H(+) = 5-enolpyruvoyl-6-hydroxy-2-succinyl-cyclohex-3-ene-1-carboxylate + CO2. It participates in quinol/quinone metabolism; 1,4-dihydroxy-2-naphthoate biosynthesis; 1,4-dihydroxy-2-naphthoate from chorismate: step 2/7. It functions in the pathway quinol/quinone metabolism; menaquinone biosynthesis. Functionally, catalyzes the thiamine diphosphate-dependent decarboxylation of 2-oxoglutarate and the subsequent addition of the resulting succinic semialdehyde-thiamine pyrophosphate anion to isochorismate to yield 2-succinyl-5-enolpyruvyl-6-hydroxy-3-cyclohexene-1-carboxylate (SEPHCHC). This chain is 2-succinyl-5-enolpyruvyl-6-hydroxy-3-cyclohexene-1-carboxylate synthase, found in Escherichia coli O157:H7.